The primary structure comprises 418 residues: Serine hydroxymethyltransferase (418 aa).

Residues Leu120 and 124–126 (GHL) contribute to the (6S)-5,6,7,8-tetrahydrofolate site. Lys229 carries the N6-(pyridoxal phosphate)lysine modification. 353–355 (SPF) provides a ligand contact to (6S)-5,6,7,8-tetrahydrofolate.

It belongs to the SHMT family. In terms of assembly, homodimer. The cofactor is pyridoxal 5'-phosphate.

Its subcellular location is the cytoplasm. It carries out the reaction (6R)-5,10-methylene-5,6,7,8-tetrahydrofolate + glycine + H2O = (6S)-5,6,7,8-tetrahydrofolate + L-serine. The protein operates within one-carbon metabolism; tetrahydrofolate interconversion. It participates in amino-acid biosynthesis; glycine biosynthesis; glycine from L-serine: step 1/1. Its function is as follows. Catalyzes the reversible interconversion of serine and glycine with tetrahydrofolate (THF) serving as the one-carbon carrier. This reaction serves as the major source of one-carbon groups required for the biosynthesis of purines, thymidylate, methionine, and other important biomolecules. Also exhibits THF-independent aldolase activity toward beta-hydroxyamino acids, producing glycine and aldehydes, via a retro-aldol mechanism. The sequence is that of Serine hydroxymethyltransferase from Psychrobacter cryohalolentis (strain ATCC BAA-1226 / DSM 17306 / VKM B-2378 / K5).